Consider the following 460-residue polypeptide: Cation efflux system protein CusC (460 aa).

A signal peptide spans 1–17 (MSPCKLLPFCVALALTG). Cys-18 carries the N-palmitoyl cysteine lipid modification. Cys-18 is lipidated: S-diacylglycerol cysteine.

It belongs to the outer membrane factor (OMF) (TC 1.B.17) family. Homotrimer. Component of the cus efflux system composed of CusA, CusB, CusC and CusF.

It localises to the cell outer membrane. Functionally, forms pores that allow passive diffusion of cations across the outer membrane. Part of a cation efflux system that mediates resistance to copper and silver. This is Cation efflux system protein CusC (cusC) from Escherichia coli O157:H7.